The chain runs to 279 residues: Small ribosomal subunit protein uS3 (279 aa).

Residues 17-86 (VDEYFLEKLE…NPQIDVQEVK (70 aa)) form the KH type-2 domain. Composition is skewed to low complexity over residues 206–233 (AEKK…STAA) and 241–252 (ESEAAEAVTPEG). Residues 206–279 (AEKKSPAAGA…VVKTDGDSQS (74 aa)) form a disordered region.

The protein belongs to the universal ribosomal protein uS3 family. As to quaternary structure, part of the 30S ribosomal subunit.

Its function is as follows. Binds the lower part of the 30S subunit head. The polypeptide is Small ribosomal subunit protein uS3 (Methanocella arvoryzae (strain DSM 22066 / NBRC 105507 / MRE50)).